Here is a 377-residue protein sequence, read N- to C-terminus: Protein RecA (377 aa).

An ATP-binding site is contributed by 66–73; the sequence is GPESSGKT. Positions 329–377 are disordered; it reads VGVRPEEPTAEPGADAAVTSAAAATDDTAKTVSAPAAKTTKSKAAAAKS. The segment covering 342–377 has biased composition (low complexity); sequence ADAAVTSAAAATDDTAKTVSAPAAKTTKSKAAAAKS.

Belongs to the RecA family.

The protein resides in the cytoplasm. Can catalyze the hydrolysis of ATP in the presence of single-stranded DNA, the ATP-dependent uptake of single-stranded DNA by duplex DNA, and the ATP-dependent hybridization of homologous single-stranded DNAs. It interacts with LexA causing its activation and leading to its autocatalytic cleavage. The polypeptide is Protein RecA (Streptomyces avermitilis (strain ATCC 31267 / DSM 46492 / JCM 5070 / NBRC 14893 / NCIMB 12804 / NRRL 8165 / MA-4680)).